The following is a 297-amino-acid chain: Probable endonuclease 4 (297 aa).

Zn(2+) is bound by residues His-69, His-110, Glu-145, Asp-179, His-182, His-214, Asp-227, His-229, and Glu-259.

Belongs to the AP endonuclease 2 family. The cofactor is Zn(2+).

It carries out the reaction Endonucleolytic cleavage to 5'-phosphooligonucleotide end-products.. In terms of biological role, endonuclease IV plays a role in DNA repair. It cleaves phosphodiester bonds at apurinic or apyrimidinic (AP) sites, generating a 3'-hydroxyl group and a 5'-terminal sugar phosphate. The protein is Probable endonuclease 4 of Listeria monocytogenes serotype 4b (strain F2365).